Consider the following 283-residue polypeptide: Elongation factor Ts (283 aa).

The involved in Mg(2+) ion dislocation from EF-Tu stretch occupies residues 79-82; it reads TDFV.

Belongs to the EF-Ts family.

Its subcellular location is the cytoplasm. Its function is as follows. Associates with the EF-Tu.GDP complex and induces the exchange of GDP to GTP. It remains bound to the aminoacyl-tRNA.EF-Tu.GTP complex up to the GTP hydrolysis stage on the ribosome. This Shewanella amazonensis (strain ATCC BAA-1098 / SB2B) protein is Elongation factor Ts.